Reading from the N-terminus, the 315-residue chain is NADH-cytochrome b5 reductase-like (315 aa).

The Oxidoreductase-like domain occupies 19-55 (RPTEPLPSQCCGSGCSPCVFDLYHRDLARWEAAQASK). An FAD-binding FR-type domain is found at 75 to 177 (ETFVAFCIIA…RGPFGDFFYK (103 aa)). Residues 157-172 (ESWRVGDTAFWRGPFG) and 182-214 (GELLLLAAGTGLAPMVPILQSITDNENDETFVT) contribute to the FAD site.

It belongs to the flavoprotein pyridine nucleotide cytochrome reductase family. Requires FAD as cofactor.

It catalyses the reaction 2 Fe(III)-[cytochrome b5] + NADH = 2 Fe(II)-[cytochrome b5] + NAD(+) + H(+). NADH-cytochrome b5 reductases are involved in desaturation and elongation of fatty acids, cholesterol biosynthesis, drug metabolism, and, in erythrocyte, methemoglobin reduction. In Homo sapiens (Human), this protein is NADH-cytochrome b5 reductase-like (CYB5RL).